A 576-amino-acid polypeptide reads, in one-letter code: Eukaryotic translation initiation factor 3 subunit D (576 aa).

Residues 103–176 (DSTKTRFGRG…KDYDKPQRNR (74 aa)) form a disordered region. The segment covering 110-122 (GRGGLARGRGQRG) has biased composition (gly residues). A compositionally biased stretch (basic and acidic residues) spans 165-176 (GWKDYDKPQRNR). The interval 304–318 (TLDMVTVNENAADAP) is RNA gate.

Belongs to the eIF-3 subunit D family. Component of the eukaryotic translation initiation factor 3 (eIF-3) complex.

The protein resides in the cytoplasm. Its function is as follows. mRNA cap-binding component of the eukaryotic translation initiation factor 3 (eIF-3) complex, which is involved in protein synthesis of a specialized repertoire of mRNAs and, together with other initiation factors, stimulates binding of mRNA and methionyl-tRNAi to the 40S ribosome. The eIF-3 complex specifically targets and initiates translation of a subset of mRNAs involved in cell proliferation. In the eIF-3 complex, eif3d specifically recognizes and binds the 7-methylguanosine cap of a subset of mRNAs. The protein is Eukaryotic translation initiation factor 3 subunit D of Botryotinia fuckeliana (strain B05.10) (Noble rot fungus).